Here is a 207-residue protein sequence, read N- to C-terminus: Thiamine-phosphate synthase (207 aa).

Residues 41 to 45 and N73 each bind 4-amino-2-methyl-5-(diphosphooxymethyl)pyrimidine; that span reads QLRLK. The Mg(2+) site is built by D74 and D93. T111 contributes to the 4-amino-2-methyl-5-(diphosphooxymethyl)pyrimidine binding site. 2-[(2R,5Z)-2-carboxy-4-methylthiazol-5(2H)-ylidene]ethyl phosphate is bound at residue 138 to 140; sequence TKT. Residue K141 coordinates 4-amino-2-methyl-5-(diphosphooxymethyl)pyrimidine. G168 lines the 2-[(2R,5Z)-2-carboxy-4-methylthiazol-5(2H)-ylidene]ethyl phosphate pocket.

Belongs to the thiamine-phosphate synthase family. The cofactor is Mg(2+).

The catalysed reaction is 2-[(2R,5Z)-2-carboxy-4-methylthiazol-5(2H)-ylidene]ethyl phosphate + 4-amino-2-methyl-5-(diphosphooxymethyl)pyrimidine + 2 H(+) = thiamine phosphate + CO2 + diphosphate. It carries out the reaction 2-(2-carboxy-4-methylthiazol-5-yl)ethyl phosphate + 4-amino-2-methyl-5-(diphosphooxymethyl)pyrimidine + 2 H(+) = thiamine phosphate + CO2 + diphosphate. The enzyme catalyses 4-methyl-5-(2-phosphooxyethyl)-thiazole + 4-amino-2-methyl-5-(diphosphooxymethyl)pyrimidine + H(+) = thiamine phosphate + diphosphate. Its pathway is cofactor biosynthesis; thiamine diphosphate biosynthesis; thiamine phosphate from 4-amino-2-methyl-5-diphosphomethylpyrimidine and 4-methyl-5-(2-phosphoethyl)-thiazole: step 1/1. Functionally, condenses 4-methyl-5-(beta-hydroxyethyl)thiazole monophosphate (THZ-P) and 2-methyl-4-amino-5-hydroxymethyl pyrimidine pyrophosphate (HMP-PP) to form thiamine monophosphate (TMP). The protein is Thiamine-phosphate synthase of Pelagibacter ubique (strain HTCC1062).